The chain runs to 211 residues: Endo-1,4-beta-xylanase 4 (211 aa).

The signal sequence occupies residues 1 to 16 (MKVTAAFAGLLVTAFA). In terms of domain architecture, GH11 spans 19–210 (VPEPVLVSRS…GACSASVTIS (192 aa)). N-linked (GlcNAc...) asparagine glycosylation occurs at asparagine 101. Glutamate 106 serves as the catalytic Nucleophile. Glutamate 197 serves as the catalytic Proton donor.

The protein belongs to the glycosyl hydrolase 11 (cellulase G) family.

Its subcellular location is the secreted. The catalysed reaction is Endohydrolysis of (1-&gt;4)-beta-D-xylosidic linkages in xylans.. Its pathway is glycan degradation; xylan degradation. Endo-1,4-beta-xylanase involved in the hydrolysis of xylan, a major structural heterogeneous polysaccharide found in plant biomass representing the second most abundant polysaccharide in the biosphere, after cellulose. The protein is Endo-1,4-beta-xylanase 4 (XYN4) of Aspergillus niger.